We begin with the raw amino-acid sequence, 188 residues long: dCTP deaminase (188 aa).

DCTP is bound by residues 111–116, 135–137, glutamine 156, tyrosine 170, and glutamine 180; these read KSTYAR and TLE. The Proton donor/acceptor role is filled by glutamate 137.

The protein belongs to the dCTP deaminase family. Homotrimer.

The catalysed reaction is dCTP + H2O + H(+) = dUTP + NH4(+). It participates in pyrimidine metabolism; dUMP biosynthesis; dUMP from dCTP (dUTP route): step 1/2. Catalyzes the deamination of dCTP to dUTP. The sequence is that of dCTP deaminase from Herminiimonas arsenicoxydans.